Here is a 603-residue protein sequence, read N- to C-terminus: MSSNAQVRRRAVQAARGESPFDLLLVEAQIVDMATGEIRPADVGIVGEMIASVHPRGSRTDAHEVRSLAGGYLSPGLMDTHVHLESSHLPPERYAEIVLTQGTTAVFWDPHELANVLGVEGVRYAVDASRHLPLQVMVAAPSSVPSTPGLEMSGADFAGAEMETMLGWPEVRGVAEVMDMHGVLHGSERMQEIVQAGLNSGKLIEGHARGLSGADLQAYLAAGVTSDHELTSADDALEKLRAGLTIEIRGSHPYLLPDIVAALKTLPHLSSQITVCTDDVPPDMLLEKGGIIALLNLLIEHGLPAVDALRFATLNAAIRLQRHDLGLIAAGRRADLVVFDSLEKLVAREVYVGGERLAHAGRLLKPIAPAPGVTPPRDTLPIAPLRADDFVLRVQGIRHGVARLRHIRGARFTQWGEVEVQVRDGKVQLPAGFSLIWVKHRHGRHQATPQIALLEGWGELRGAIATSYSHDSHNLVVLGRDADDMALAANQLIASGGGMALAQQGEILAHVAMPIAGMLSDLPAAELARQFRELRDLSSQVADWEPPYRVFKAIEGTCLACNAGPHLTDLGLTDGGSRQIVDPLIACRETPEPTDHNNNPQGA.

It belongs to the metallo-dependent hydrolases superfamily. Adenine deaminase family. Homodimer. The cofactor is Mn(2+).

It catalyses the reaction adenine + H2O + H(+) = hypoxanthine + NH4(+). In Klebsiella pneumoniae (strain 342), this protein is Adenine deaminase.